A 273-amino-acid polypeptide reads, in one-letter code: MAIVKCKPTSPGRRHVVKIVNQELYKGKPFAALLDSKSKSGGRNNNGRITTRHIGGGHKQHYRIVDFKRDKDGIPAKVERLEYDPNRTANIALVLYADGERRYILAPKGLKAGDAIASGADAAIKVGNTLPMRNIPVGSTVHAVEMKPGKGAQLARSAGTFIQILAREGNYVTLRLRSGEVRKVLAECRATIGEVGNSEHMLRQLGKAGANRWRGIRPTVRGMAMNPVDHPHGGGEGRNKGMQPVSPWGQKAKGFKTRKNKRTDKYIVRRRNK.

Disordered regions lie at residues 35–54 (DSKSKSGGRNNNGRITTRHI) and 222–273 (GMAM…RRNK). Positions 39–49 (KSGGRNNNGRI) are enriched in polar residues. The span at 229–239 (DHPHGGGEGRN) shows a compositional bias: basic and acidic residues. Positions 253–273 (KGFKTRKNKRTDKYIVRRRNK) are enriched in basic residues.

It belongs to the universal ribosomal protein uL2 family. In terms of assembly, part of the 50S ribosomal subunit. Forms a bridge to the 30S subunit in the 70S ribosome.

In terms of biological role, one of the primary rRNA binding proteins. Required for association of the 30S and 50S subunits to form the 70S ribosome, for tRNA binding and peptide bond formation. It has been suggested to have peptidyltransferase activity; this is somewhat controversial. Makes several contacts with the 16S rRNA in the 70S ribosome. The sequence is that of Large ribosomal subunit protein uL2 from Aeromonas salmonicida (strain A449).